Here is a 659-residue protein sequence, read N- to C-terminus: Threonine--tRNA ligase (659 aa).

Residues 3–64 form the TGS domain; the sequence is EKIRITLIDN…LEDGRLEIIT (62 aa). The interval 249–555 is catalytic; that stretch reads DHRRLGQEMD…LIEHHAGRFP (307 aa). Zn(2+)-binding residues include C354, H405, and H532.

The protein belongs to the class-II aminoacyl-tRNA synthetase family. Homodimer. Zn(2+) is required as a cofactor.

It localises to the cytoplasm. The catalysed reaction is tRNA(Thr) + L-threonine + ATP = L-threonyl-tRNA(Thr) + AMP + diphosphate + H(+). In terms of biological role, catalyzes the attachment of threonine to tRNA(Thr) in a two-step reaction: L-threonine is first activated by ATP to form Thr-AMP and then transferred to the acceptor end of tRNA(Thr). Also edits incorrectly charged L-seryl-tRNA(Thr). The sequence is that of Threonine--tRNA ligase from Zymomonas mobilis subsp. mobilis (strain ATCC 31821 / ZM4 / CP4).